The sequence spans 220 residues: Putative DNA repair glycosylase MJ1434 (220 aa).

[4Fe-4S] cluster-binding residues include cysteine 202, cysteine 208, cysteine 211, and cysteine 217.

It belongs to the Nth/MutY family. The cofactor is [4Fe-4S] cluster.

The protein is Putative DNA repair glycosylase MJ1434 of Methanocaldococcus jannaschii (strain ATCC 43067 / DSM 2661 / JAL-1 / JCM 10045 / NBRC 100440) (Methanococcus jannaschii).